The sequence spans 202 residues: Proteasome subunit beta 1 (202 aa).

Position 1 (M1) is a propeptide, removed in mature form; by autocatalysis. T2 acts as the Nucleophile in catalysis.

It belongs to the peptidase T1B family. As to quaternary structure, the 20S proteasome core is composed of 14 alpha and 14 beta subunits that assemble into four stacked heptameric rings, resulting in a barrel-shaped structure. The two inner rings, each composed of seven catalytic beta subunits, are sandwiched by two outer rings, each composed of seven alpha subunits. The catalytic chamber with the active sites is on the inside of the barrel. Has a gated structure, the ends of the cylinder being occluded by the N-termini of the alpha-subunits. Is capped at one or both ends by the proteasome regulatory ATPase, PAN.

The protein resides in the cytoplasm. The catalysed reaction is Cleavage of peptide bonds with very broad specificity.. The formation of the proteasomal ATPase PAN-20S proteasome complex, via the docking of the C-termini of PAN into the intersubunit pockets in the alpha-rings, triggers opening of the gate for substrate entry. Interconversion between the open-gate and close-gate conformations leads to a dynamic regulation of the 20S proteasome proteolysis activity. Functionally, component of the proteasome core, a large protease complex with broad specificity involved in protein degradation. The sequence is that of Proteasome subunit beta 1 from Pyrobaculum aerophilum (strain ATCC 51768 / DSM 7523 / JCM 9630 / CIP 104966 / NBRC 100827 / IM2).